The primary structure comprises 228 residues: Ribonuclease H (228 aa).

The region spanning 2–142 is the RNase H type-1 domain; that stretch reads GPMRTIVYAD…ADRLATLGRR (141 aa). Mg(2+) contacts are provided by D11, E49, D71, and D134.

Belongs to the RNase H family. In terms of assembly, monomer. Mg(2+) serves as cofactor.

It is found in the cytoplasm. The enzyme catalyses Endonucleolytic cleavage to 5'-phosphomonoester.. Functionally, endonuclease that specifically degrades the RNA of RNA-DNA hybrids. This is Ribonuclease H from Methylorubrum extorquens (strain PA1) (Methylobacterium extorquens).